The chain runs to 118 residues: Disulfide bond formation protein (118 aa).

Residues 1 to 27 (MRAKWLWMTAVGSLLITVLTAWGWAAA) form the signal peptide. A Thioredoxin domain is found at 28–114 (SSQDSKIVYV…VAEAVLRSFF (87 aa)). Cysteines 42 and 45 form a disulfide.

Belongs to the thioredoxin family.

The protein resides in the secreted. Stimulates the oxidation and reduction of disulfide bonds in vitro. In Brevibacillus choshinensis, this protein is Disulfide bond formation protein (bdb).